We begin with the raw amino-acid sequence, 200 residues long: GTP cyclohydrolase-2 (200 aa).

52 to 56 (RIHSE) contributes to the GTP binding site. Zn(2+) contacts are provided by Cys-57, Cys-68, and Cys-70. GTP is bound by residues Gln-73, 94–96 (EGR), and Thr-116. Residue Asp-128 is the Proton acceptor of the active site. Arg-130 functions as the Nucleophile in the catalytic mechanism. Residues Thr-151 and Lys-156 each coordinate GTP.

It belongs to the GTP cyclohydrolase II family. Requires Zn(2+) as cofactor.

It carries out the reaction GTP + 4 H2O = 2,5-diamino-6-hydroxy-4-(5-phosphoribosylamino)-pyrimidine + formate + 2 phosphate + 3 H(+). Its pathway is cofactor biosynthesis; riboflavin biosynthesis; 5-amino-6-(D-ribitylamino)uracil from GTP: step 1/4. Functionally, catalyzes the conversion of GTP to 2,5-diamino-6-ribosylamino-4(3H)-pyrimidinone 5'-phosphate (DARP), formate and pyrophosphate. In Psychromonas ingrahamii (strain DSM 17664 / CCUG 51855 / 37), this protein is GTP cyclohydrolase-2.